Consider the following 247-residue polypeptide: 2,3-bisphosphoglycerate-dependent phosphoglycerate mutase (247 aa).

Residues 8–15, 21–22, arginine 60, 87–90, lysine 98, 114–115, and 183–184 contribute to the substrate site; these read RHGESQWN, TG, ERHY, RR, and GN. The active-site Tele-phosphohistidine intermediate is histidine 9. Glutamate 87 functions as the Proton donor/acceptor in the catalytic mechanism.

Belongs to the phosphoglycerate mutase family. BPG-dependent PGAM subfamily.

The catalysed reaction is (2R)-2-phosphoglycerate = (2R)-3-phosphoglycerate. It functions in the pathway carbohydrate degradation; glycolysis; pyruvate from D-glyceraldehyde 3-phosphate: step 3/5. Functionally, catalyzes the interconversion of 2-phosphoglycerate and 3-phosphoglycerate. The polypeptide is 2,3-bisphosphoglycerate-dependent phosphoglycerate mutase (Chlorobaculum tepidum (strain ATCC 49652 / DSM 12025 / NBRC 103806 / TLS) (Chlorobium tepidum)).